Consider the following 433-residue polypeptide: Trigger factor (433 aa).

Positions 163–248 (GDTVNIDFSG…VNEIKFKDVP (86 aa)) constitute a PPIase FKBP-type domain.

Belongs to the FKBP-type PPIase family. Tig subfamily.

The protein resides in the cytoplasm. It carries out the reaction [protein]-peptidylproline (omega=180) = [protein]-peptidylproline (omega=0). Its function is as follows. Involved in protein export. Acts as a chaperone by maintaining the newly synthesized protein in an open conformation. Functions as a peptidyl-prolyl cis-trans isomerase. The sequence is that of Trigger factor from Staphylococcus epidermidis (strain ATCC 35984 / DSM 28319 / BCRC 17069 / CCUG 31568 / BM 3577 / RP62A).